A 265-amino-acid polypeptide reads, in one-letter code: Phosphatidylglycerol--prolipoprotein diacylglyceryl transferase (265 aa).

The next 7 helical transmembrane spans lie at 11–31 (AVSI…FGFI), 56–76 (MVTW…ILFY), 91–111 (IWHG…AVWL), 120–140 (FLSV…FGRI), 173–193 (QLYE…WFSG), 198–218 (VGAV…AVEF), and 233–253 (WLTM…WLLL). Arginine 139 contacts a 1,2-diacyl-sn-glycero-3-phospho-(1'-sn-glycerol).

This sequence belongs to the Lgt family.

The protein resides in the cell inner membrane. It catalyses the reaction L-cysteinyl-[prolipoprotein] + a 1,2-diacyl-sn-glycero-3-phospho-(1'-sn-glycerol) = an S-1,2-diacyl-sn-glyceryl-L-cysteinyl-[prolipoprotein] + sn-glycerol 1-phosphate + H(+). The protein operates within protein modification; lipoprotein biosynthesis (diacylglyceryl transfer). In terms of biological role, catalyzes the transfer of the diacylglyceryl group from phosphatidylglycerol to the sulfhydryl group of the N-terminal cysteine of a prolipoprotein, the first step in the formation of mature lipoproteins. This chain is Phosphatidylglycerol--prolipoprotein diacylglyceryl transferase, found in Nitratidesulfovibrio vulgaris (strain DSM 19637 / Miyazaki F) (Desulfovibrio vulgaris).